The chain runs to 217 residues: Ufm1-specific protease 1 (217 aa).

Residues Cys-53, Asp-175, and His-177 contribute to the active site.

Belongs to the peptidase C78 family. As to expression, widely expressed. Expressed at higher level in brain, heart, kidney and skeletal muscle.

It is found in the cytoplasm. Its subcellular location is the cytosol. In terms of biological role, thiol-dependent isopeptidase that specifically mediate the processing of UFM1 precursors as well as the deconjugation of UFM1 from target proteins. Mainly responsible for the maturation of the UFM1 precursor, a prerequisite for conjugation reactions. In Mus musculus (Mouse), this protein is Ufm1-specific protease 1.